The primary structure comprises 1342 residues: DNA-directed RNA polymerase subunit beta (1342 aa).

It belongs to the RNA polymerase beta chain family. The RNAP catalytic core consists of 2 alpha, 1 beta, 1 beta' and 1 omega subunit. When a sigma factor is associated with the core the holoenzyme is formed, which can initiate transcription.

The catalysed reaction is RNA(n) + a ribonucleoside 5'-triphosphate = RNA(n+1) + diphosphate. In terms of biological role, DNA-dependent RNA polymerase catalyzes the transcription of DNA into RNA using the four ribonucleoside triphosphates as substrates. This Yersinia pestis bv. Antiqua (strain Angola) protein is DNA-directed RNA polymerase subunit beta.